Here is a 488-residue protein sequence, read N- to C-terminus: Glutamyl-tRNA(Gln) amidotransferase subunit A (488 aa).

Active-site charge relay system residues include K77 and S152. Catalysis depends on S176, which acts as the Acyl-ester intermediate.

The protein belongs to the amidase family. GatA subfamily. In terms of assembly, heterotrimer of A, B and C subunits.

The enzyme catalyses L-glutamyl-tRNA(Gln) + L-glutamine + ATP + H2O = L-glutaminyl-tRNA(Gln) + L-glutamate + ADP + phosphate + H(+). Its function is as follows. Allows the formation of correctly charged Gln-tRNA(Gln) through the transamidation of misacylated Glu-tRNA(Gln) in organisms which lack glutaminyl-tRNA synthetase. The reaction takes place in the presence of glutamine and ATP through an activated gamma-phospho-Glu-tRNA(Gln). This Streptococcus sanguinis (strain SK36) protein is Glutamyl-tRNA(Gln) amidotransferase subunit A.